A 79-amino-acid chain; its full sequence is Toxin 3FTx-Oxy5 (79 aa).

Positions Met-1–Thr-23 are cleaved as a signal peptide. 4 disulfide bridges follow: Cys-24–Cys-41, Cys-34–Cys-59, Cys-63–Cys-71, and Cys-72–Cys-77.

This sequence belongs to the three-finger toxin family. Short-chain subfamily. In terms of tissue distribution, expressed by the venom gland.

It is found in the secreted. This chain is Toxin 3FTx-Oxy5, found in Oxyuranus microlepidotus (Inland taipan).